Here is a 174-residue protein sequence, read N- to C-terminus: Endoribonuclease YbeY (174 aa).

3 residues coordinate Zn(2+): His-129, His-133, and His-139.

Belongs to the endoribonuclease YbeY family. Zn(2+) serves as cofactor.

It localises to the cytoplasm. Its function is as follows. Single strand-specific metallo-endoribonuclease involved in late-stage 70S ribosome quality control and in maturation of the 3' terminus of the 16S rRNA. This Lactobacillus acidophilus (strain ATCC 700396 / NCK56 / N2 / NCFM) protein is Endoribonuclease YbeY.